We begin with the raw amino-acid sequence, 146 residues long: Endoribonuclease YbeY (146 aa).

Residues histidine 108, histidine 112, and histidine 118 each contribute to the Zn(2+) site.

The protein belongs to the endoribonuclease YbeY family. Requires Zn(2+) as cofactor.

Its subcellular location is the cytoplasm. Single strand-specific metallo-endoribonuclease involved in late-stage 70S ribosome quality control and in maturation of the 3' terminus of the 16S rRNA. This is Endoribonuclease YbeY from Aster yellows witches'-broom phytoplasma (strain AYWB).